The following is a 359-amino-acid chain: Chaperone protein DnaJ (359 aa).

Residues 3–68 form the J domain; the sequence is DYYEILGVPK…ERRQTYDRYG (66 aa). Residues 128–205 form a CR-type zinc finger; the sequence is GVSKDIKYKI…CAGKGFIEEQ (78 aa). Residues C141, C144, C157, C160, C179, C182, C193, and C196 each coordinate Zn(2+). CXXCXGXG motif repeat units lie at residues 141 to 148, 157 to 164, 179 to 186, and 193 to 200; these read CKTCDGTG, CPYCGGSG, CPFCKGSG, and CHDCAGKG.

It belongs to the DnaJ family. In terms of assembly, homodimer. The cofactor is Zn(2+).

Its subcellular location is the cytoplasm. In terms of biological role, participates actively in the response to hyperosmotic and heat shock by preventing the aggregation of stress-denatured proteins and by disaggregating proteins, also in an autonomous, DnaK-independent fashion. Unfolded proteins bind initially to DnaJ; upon interaction with the DnaJ-bound protein, DnaK hydrolyzes its bound ATP, resulting in the formation of a stable complex. GrpE releases ADP from DnaK; ATP binding to DnaK triggers the release of the substrate protein, thus completing the reaction cycle. Several rounds of ATP-dependent interactions between DnaJ, DnaK and GrpE are required for fully efficient folding. Also involved, together with DnaK and GrpE, in the DNA replication of plasmids through activation of initiation proteins. This is Chaperone protein DnaJ from Campylobacter hominis (strain ATCC BAA-381 / DSM 21671 / CCUG 45161 / LMG 19568 / NCTC 13146 / CH001A).